The primary structure comprises 34 residues: MSDIN-like toxin proprotein 3 (34 aa).

A propeptide spanning residues 1–10 is cleaved from the precursor; the sequence is MSDINVIRAP. A cross-link (cyclopeptide (Leu-Pro)) is located at residues 11-18; it reads LLILSILP. Positions 19-34 are excised as a propeptide; sequence CVGDDIEVLRRGEGLS.

It belongs to the MSDIN fungal toxin family. Processed by the macrocyclase-peptidase enzyme POPB to yield a toxic cyclic octapeptide. POPB first removes 10 residues from the N-terminus. Conformational trapping of the remaining peptide forces the enzyme to release this intermediate rather than proceed to macrocyclization. The enzyme rebinds the remaining peptide in a different conformation and catalyzes macrocyclization of the N-terminal 8 residues. Expressed in basidiocarps.

Probable toxin that belongs to the MSDIN-like toxin family responsible for a large number of food poisoning cases and deaths. This is MSDIN-like toxin proprotein 3 from Amanita exitialis (Guangzhou destroying angel).